The primary structure comprises 248 residues: Probable septum site-determining protein MinC (248 aa).

Positions 94–126 (GMPPAMRGGQPAADFEAPAGEPQANPGAPEPQI) are disordered.

It belongs to the MinC family. Interacts with MinD and FtsZ.

Cell division inhibitor that blocks the formation of polar Z ring septums. Rapidly oscillates between the poles of the cell to destabilize FtsZ filaments that have formed before they mature into polar Z rings. Prevents FtsZ polymerization. This Brucella suis biovar 1 (strain 1330) protein is Probable septum site-determining protein MinC.